The chain runs to 245 residues: tRNA1(Val) (adenine(37)-N6)-methyltransferase (245 aa).

The protein belongs to the methyltransferase superfamily. tRNA (adenine-N(6)-)-methyltransferase family.

Its subcellular location is the cytoplasm. It catalyses the reaction adenosine(37) in tRNA1(Val) + S-adenosyl-L-methionine = N(6)-methyladenosine(37) in tRNA1(Val) + S-adenosyl-L-homocysteine + H(+). Functionally, specifically methylates the adenine in position 37 of tRNA(1)(Val) (anticodon cmo5UAC). The chain is tRNA1(Val) (adenine(37)-N6)-methyltransferase from Escherichia coli (strain SE11).